Here is a 62-residue protein sequence, read N- to C-terminus: Small ribosomal subunit protein bS21 (62 aa).

The segment at 38–62 is disordered; it reads YEKPSERRKRKMNAAVRKNRRTRHG.

Belongs to the bacterial ribosomal protein bS21 family.

The protein is Small ribosomal subunit protein bS21 of Gemmatimonas aurantiaca (strain DSM 14586 / JCM 11422 / NBRC 100505 / T-27).